The chain runs to 442 residues: Probable protein phosphatase 2C 15 (442 aa).

The region spanning 35 to 303 (AAERPELQVG…DDTTCIVVDI (269 aa)) is the PPM-type phosphatase domain. Asp-80, Gly-81, Asp-255, and Asp-294 together coordinate Mn(2+). Residues 420–434 (KKEAMEGKRRSRDSS) show a composition bias toward basic and acidic residues. Residues 420–442 (KKEAMEGKRRSRDSSSRNSGSSE) form a disordered region.

Belongs to the PP2C family. Requires Mg(2+) as cofactor. Mn(2+) serves as cofactor.

It carries out the reaction O-phospho-L-seryl-[protein] + H2O = L-seryl-[protein] + phosphate. The enzyme catalyses O-phospho-L-threonyl-[protein] + H2O = L-threonyl-[protein] + phosphate. The polypeptide is Probable protein phosphatase 2C 15 (Oryza sativa subsp. japonica (Rice)).